A 651-amino-acid polypeptide reads, in one-letter code: Mitochondrial sodium/calcium exchanger protein (651 aa).

Residues 51 to 71 (VILIILGILYLIILFVIMSSI) traverse the membrane as a helical segment. The Cytoplasmic portion of the chain corresponds to 72 to 91 (ADDFFCPAISGIVSHLRMSE). A helical membrane pass occupies residues 92–112 (SIAGVTFLAFGNGAPDVFSSI). At 113–126 (SSVLTTPKPKADLA) the chain is on the extracellular side. A helical transmembrane segment spans residues 127–147 (LGDLFGTSIFVTTVVLAIIIF). Over 148-161 (TKSFKVAIIPTLRD) the chain is Cytoplasmic. A helical membrane pass occupies residues 162 to 182 (LIFYMTTLAFIVFCFLKFDKI). A topological domain (extracellular) is located at residue E183. A helical transmembrane segment spans residues 184-204 (VWMPATFLGIYGVYVVTVIIL). Residues 205–398 (GIYRTHRKKR…PSRDEFSEMN (194 aa)) lie on the Cytoplasmic side of the membrane. The chain crosses the membrane as a helical span at residues 399–419 (IFIKIVTVIKVVPVFFFKLTV). Topologically, residues 420–428 (PSNEMSWCK) are extracellular. Residues 429 to 449 (PLFILHCFASIQFALFSIQII) traverse the membrane as a helical segment. Residues 450-458 (TLKPFDGSP) are Cytoplasmic-facing. Residues 459–479 (GLWLYGLGFSAILAMVAMYFL) form a helical membrane-spanning segment. Residues 480 to 486 (PLSKEQK) are Extracellular-facing. Residues 487–507 (YYKEIYSYLGFLMSIAWIYAT) traverse the membrane as a helical segment. The Cytoplasmic segment spans residues 508 to 510 (SNE). A helical membrane pass occupies residues 511–531 (IVSVVTMIGVVTGLSMELLGL). Over 532–559 (TIMAWSNCIGDIVADIAVVKQGYPKMAM) the chain is Extracellular. A helical transmembrane segment spans residues 560 to 580 (AAAIGGPLFNLLIGFGLPFTI). Residues 581-595 (AAAQGKEMELLINPV) are Cytoplasmic-facing. A helical transmembrane segment spans residues 596-616 (YRLLMLFLGISLVTTFVALFI). Residues 617 to 626 (QRFTVRRPHA) are Extracellular-facing. A helical membrane pass occupies residues 627–647 (VLLIFIFVVFLIFICLAEFHV). Residues 648–651 (LEWN) lie on the Cytoplasmic side of the membrane.

The protein belongs to the Ca(2+):cation antiporter (CaCA) (TC 2.A.19) family. SLC24A subfamily. In terms of tissue distribution, expressed in the seam cells of the organism. Expression is visible in the seam cells across all larval stages, and expression persists into the adult stage of the organism.

The protein localises to the mitochondrion inner membrane. Inhibited by the sodium/calcium exchanger inhibitor CGP-37157. Mitochondrial sodium/calcium antiporter that mediates sodium-dependent calcium efflux from mitochondrion, thereby acting as a key regulator of mitochondrion calcium homeostasis. Required for patterning of neural circuits: functions in the same pathway as RAC-dependent effectors of the unc-6/netrin signaling pathway to set left/ right patterning of the VD/DD GABAergic circuit. The sequence is that of Mitochondrial sodium/calcium exchanger protein from Caenorhabditis elegans.